Consider the following 246-residue polypeptide: Polyhedrin (246 aa).

This sequence belongs to the polyhedrin family.

Its function is as follows. Major component of the virus occlusion bodies, which are large proteinaceous structures (polyhedra), that protect the virus from the outside environment for extended periods until they are ingested by insect larvae. The protein is Polyhedrin (PH) of Heliothis zea nuclear polyhedrosis virus (HzSNPV).